The following is a 108-amino-acid chain: Sperm-egg fusion protein LLCFC1 (108 aa).

The first 30 residues, 1–30 (MTSLGSQLHRATFLTALLLLLLLQVKGVKT), serve as a signal peptide directing secretion. The segment covering 39 to 49 (GDKSQKDKVSS) has biased composition (basic and acidic residues). Positions 39–64 (GDKSQKDKVSSEDQGEEEYEEHFEAS) are disordered.

In terms of tissue distribution, detected in testicular germ cells and spermatozoa (at protein level). Abundantly expressed in testis.

It is found in the secreted. In terms of biological role, sperm protein required for fusion of sperm with the egg membrane during fertilization. The polypeptide is Sperm-egg fusion protein LLCFC1 (Mus musculus (Mouse)).